A 363-amino-acid chain; its full sequence is Putative RAD2-like endonuclease 095R (363 aa).

The protein belongs to the XPG/RAD2 endonuclease family. Requires Mg(2+) as cofactor.

The protein localises to the host nucleus. Probable endonuclease. The chain is Putative RAD2-like endonuclease 095R from Frog virus 3 (isolate Goorha) (FV-3).